Reading from the N-terminus, the 268-residue chain is Tryptophan synthase alpha chain (268 aa).

Residues Glu-49 and Asp-60 each act as proton acceptor in the active site.

The protein belongs to the TrpA family. Tetramer of two alpha and two beta chains.

The catalysed reaction is (1S,2R)-1-C-(indol-3-yl)glycerol 3-phosphate + L-serine = D-glyceraldehyde 3-phosphate + L-tryptophan + H2O. Its pathway is amino-acid biosynthesis; L-tryptophan biosynthesis; L-tryptophan from chorismate: step 5/5. In terms of biological role, the alpha subunit is responsible for the aldol cleavage of indoleglycerol phosphate to indole and glyceraldehyde 3-phosphate. The sequence is that of Tryptophan synthase alpha chain from Haemophilus influenzae (strain PittEE).